The following is a 96-amino-acid chain: Pro-glucagon (96 aa).

Basic and acidic residues-rich tracts occupy residues 1 to 12 (LQDAEDSSRFDA) and 19 to 30 (EARELSTPKXHS). The interval 1-35 (LQDAEDSSRFDADDTLAGEARELSTPKXHSEGTFS) is disordered.

It belongs to the glucagon family.

The protein resides in the secreted. In terms of biological role, plays a key role in glucose metabolism and homeostasis. Regulates blood glucose by increasing gluconeogenesis and decreasing glycolysis. The chain is Pro-glucagon (gcg) from Myoxocephalus scorpius (Shorthorn sculpin).